The following is a 258-amino-acid chain: Cytosolic Fe-S cluster assembly factor Nubp2 homolog (258 aa).

Position 14 to 21 (14 to 21 (GKGGVGKS)) interacts with ATP. Positions 188 and 191 each coordinate [4Fe-4S] cluster.

It belongs to the Mrp/NBP35 ATP-binding proteins family. NUBP2/CFD1 subfamily. In terms of assembly, heterotetramer of 2 Nubp1 and 2 Nubp2 chains. The cofactor is [4Fe-4S] cluster.

The protein resides in the cytoplasm. Functionally, component of the cytosolic iron-sulfur (Fe/S) protein assembly (CIA) machinery. Required for maturation of extramitochondrial Fe-S proteins. The Nubp1-Nubp2 heterotetramer forms a Fe-S scaffold complex, mediating the de novo assembly of an Fe-S cluster and its transfer to target apoproteins. The protein is Cytosolic Fe-S cluster assembly factor Nubp2 homolog of Drosophila pseudoobscura pseudoobscura (Fruit fly).